The sequence spans 92 residues: Small ribosomal subunit protein uS19 (92 aa).

This sequence belongs to the universal ribosomal protein uS19 family.

In terms of biological role, protein S19 forms a complex with S13 that binds strongly to the 16S ribosomal RNA. The sequence is that of Small ribosomal subunit protein uS19 from Shewanella amazonensis (strain ATCC BAA-1098 / SB2B).